The following is a 328-amino-acid chain: L-lactate dehydrogenase (328 aa).

NAD(+)-binding positions include valine 18, glutamate 39, lysine 46, tyrosine 71, and 85 to 86 (GA). Substrate contacts are provided by glutamine 88 and arginine 94. Residues serine 107, 124 to 126 (AAN), and serine 149 each bind NAD(+). 126-129 (NPVD) is a substrate binding site. A substrate-binding site is contributed by 154-157 (DSAR). Residues arginine 159 and histidine 174 each contribute to the beta-D-fructose 1,6-bisphosphate site. Histidine 181 functions as the Proton acceptor in the catalytic mechanism. Tyrosine 226 carries the post-translational modification Phosphotyrosine. Residue threonine 235 participates in substrate binding.

Belongs to the LDH/MDH superfamily. LDH family. In terms of assembly, homotetramer.

The protein resides in the cytoplasm. It carries out the reaction (S)-lactate + NAD(+) = pyruvate + NADH + H(+). It participates in fermentation; pyruvate fermentation to lactate; (S)-lactate from pyruvate: step 1/1. With respect to regulation, allosterically activated by fructose 1,6-bisphosphate (FBP). Functionally, catalyzes the conversion of lactate to pyruvate. This Streptococcus gordonii (strain Challis / ATCC 35105 / BCRC 15272 / CH1 / DL1 / V288) protein is L-lactate dehydrogenase.